A 239-amino-acid polypeptide reads, in one-letter code: Purine nucleoside phosphorylase DeoD-type (239 aa).

Residue His-5 coordinates a purine D-ribonucleoside. Phosphate contacts are provided by Gly-21 and Arg-25. Position 27 is an N6-acetyllysine (Lys-27). Residues Arg-44 and 88-91 (RVGS) each bind phosphate. Residues 180 to 182 (EME) and 204 to 205 (SD) each bind a purine D-ribonucleoside. The Proton donor role is filled by Asp-205.

Belongs to the PNP/UDP phosphorylase family. As to quaternary structure, homohexamer; trimer of homodimers.

It catalyses the reaction a purine D-ribonucleoside + phosphate = a purine nucleobase + alpha-D-ribose 1-phosphate. It carries out the reaction a purine 2'-deoxy-D-ribonucleoside + phosphate = a purine nucleobase + 2-deoxy-alpha-D-ribose 1-phosphate. Catalyzes the reversible phosphorolytic breakdown of the N-glycosidic bond in the beta-(deoxy)ribonucleoside molecules, with the formation of the corresponding free purine bases and pentose-1-phosphate. This chain is Purine nucleoside phosphorylase DeoD-type, found in Escherichia coli O8 (strain IAI1).